A 270-amino-acid chain; its full sequence is NAD kinase (270 aa).

D45 (proton acceptor) is an active-site residue. Residues 45–46 (DG), 121–122 (NE), K147, D149, 160–165 (TAYSKS), and A184 each bind NAD(+).

Belongs to the NAD kinase family. A divalent metal cation is required as a cofactor.

It localises to the cytoplasm. It catalyses the reaction NAD(+) + ATP = ADP + NADP(+) + H(+). Functionally, involved in the regulation of the intracellular balance of NAD and NADP, and is a key enzyme in the biosynthesis of NADP. Catalyzes specifically the phosphorylation on 2'-hydroxyl of the adenosine moiety of NAD to yield NADP. This chain is NAD kinase, found in Lactobacillus johnsonii (strain CNCM I-12250 / La1 / NCC 533).